We begin with the raw amino-acid sequence, 252 residues long: Type III pantothenate kinase (252 aa).

6–13 (DIGNTNTV) is a binding site for ATP. Substrate is bound at residue 105-108 (GADR). Asp107 acts as the Proton acceptor in catalysis. Asp127 contributes to the K(+) binding site. Residue Thr130 participates in ATP binding. Thr182 lines the substrate pocket.

It belongs to the type III pantothenate kinase family. As to quaternary structure, homodimer. NH4(+) serves as cofactor. Requires K(+) as cofactor.

It localises to the cytoplasm. It catalyses the reaction (R)-pantothenate + ATP = (R)-4'-phosphopantothenate + ADP + H(+). Its pathway is cofactor biosynthesis; coenzyme A biosynthesis; CoA from (R)-pantothenate: step 1/5. Functionally, catalyzes the phosphorylation of pantothenate (Pan), the first step in CoA biosynthesis. The protein is Type III pantothenate kinase of Salinispora arenicola (strain CNS-205).